We begin with the raw amino-acid sequence, 663 residues long: Endopolyphosphatase (663 aa).

The Cytoplasmic portion of the chain corresponds to 1–14; sequence MAVNEKDVGRKSRV. The chain crosses the membrane as a helical; Signal-anchor for type II membrane protein span at residues 15–35; the sequence is SVVLWVFIALGTLFLCKNAFT. Topologically, residues 36 to 663 are vacuolar; sequence FSSESIHGLK…ISTGYEDERN (628 aa). N-linked (GlcNAc...) asparagine glycosylation is found at asparagine 487 and asparagine 526. The interval 534–564 is disordered; that stretch reads SAEQNKKKKKKNGKPDKSIPRKKPDELPAGP. The span at 546-559 shows a compositional bias: basic and acidic residues; sequence GKPDKSIPRKKPDE.

Belongs to the endopolyphosphatase PPN1 family. Requires a divalent metal cation as cofactor. Processing by proteases in the vacuole may be required for activation.

It localises to the vacuole membrane. It carries out the reaction [phosphate](n+1) + n H2O = (n+1) phosphate + n H(+). Its function is as follows. Catalyzes the hydrolysis of inorganic polyphosphate (polyP) chains of many hundreds of phosphate residues into shorter lengths. The polypeptide is Endopolyphosphatase (PPN1) (Candida glabrata (strain ATCC 2001 / BCRC 20586 / JCM 3761 / NBRC 0622 / NRRL Y-65 / CBS 138) (Yeast)).